A 105-amino-acid chain; its full sequence is Immunoglobulin lambda-like polypeptide 1 (105 aa).

A c region region spans residues 1-105; that stretch reads QPKSDPLVTL…EKSVSPAECS (105 aa). Positions 6-100 constitute an Ig-like C1-type domain; sequence PLVTLFLPSL…EGNTVEKSVS (95 aa). Residues C27 and C86 are joined by a disulfide bond.

Associates non-covalently with VPREB1A. Interacts with SYNV1/HRD1 (via N-terminus); this interaction leads to increased IGLL1 ubiquitination and degradation in pre-B cells, possibly through a lysosomal, not proteasomal, pathway.

It is found in the endoplasmic reticulum. The protein localises to the secreted. Functionally, critical for B-cell development. In Mus spretus (Western Mediterranean mouse), this protein is Immunoglobulin lambda-like polypeptide 1 (Igll1).